The chain runs to 98 residues: Co-chaperonin GroES (98 aa).

The tract at residues 32 to 56 (NAKEKPQQGEVLAVGPGRRDDEGKR) is disordered.

This sequence belongs to the GroES chaperonin family. In terms of assembly, heptamer of 7 subunits arranged in a ring. Interacts with the chaperonin GroEL.

It localises to the cytoplasm. Functionally, together with the chaperonin GroEL, plays an essential role in assisting protein folding. The GroEL-GroES system forms a nano-cage that allows encapsulation of the non-native substrate proteins and provides a physical environment optimized to promote and accelerate protein folding. GroES binds to the apical surface of the GroEL ring, thereby capping the opening of the GroEL channel. In Bifidobacterium animalis subsp. lactis (strain AD011), this protein is Co-chaperonin GroES.